The primary structure comprises 259 residues: Uridylate kinase (259 aa).

21–24 (KLSG) serves as a coordination point for ATP. UMP is bound at residue Gly-63. The ATP site is built by Gly-64 and Arg-68. Residues Asp-83 and 144 to 151 (TGNPYFTT) each bind UMP. Residues Thr-171, Phe-177, and Asp-180 each contribute to the ATP site.

The protein belongs to the UMP kinase family. Homohexamer.

It localises to the cytoplasm. The catalysed reaction is UMP + ATP = UDP + ADP. It functions in the pathway pyrimidine metabolism; CTP biosynthesis via de novo pathway; UDP from UMP (UMPK route): step 1/1. Its activity is regulated as follows. Inhibited by UTP. Catalyzes the reversible phosphorylation of UMP to UDP. The protein is Uridylate kinase of Salinibacter ruber (strain DSM 13855 / M31).